A 166-amino-acid polypeptide reads, in one-letter code: Small ribosomal subunit protein uS5 (166 aa).

An S5 DRBM domain is found at 11–74 (LQEKLIAVNR…EKARRNMINV (64 aa)).

It belongs to the universal ribosomal protein uS5 family. In terms of assembly, part of the 30S ribosomal subunit. Contacts proteins S4 and S8.

Functionally, with S4 and S12 plays an important role in translational accuracy. Its function is as follows. Located at the back of the 30S subunit body where it stabilizes the conformation of the head with respect to the body. This Pasteurella multocida (strain Pm70) protein is Small ribosomal subunit protein uS5.